The following is a 117-amino-acid chain: Fluoride-specific ion channel FluC 2 (117 aa).

Transmembrane regions (helical) follow at residues Met-1–Ile-21 and Phe-46–Val-66. Na(+) is bound by residues Gly-71 and Thr-74. A helical membrane pass occupies residues Leu-95–Tyr-115.

It belongs to the fluoride channel Fluc/FEX (TC 1.A.43) family.

Its subcellular location is the cell membrane. It catalyses the reaction fluoride(in) = fluoride(out). Its activity is regulated as follows. Na(+) is not transported, but it plays an essential structural role and its presence is essential for fluoride channel function. Fluoride-specific ion channel. Important for reducing fluoride concentration in the cell, thus reducing its toxicity. This chain is Fluoride-specific ion channel FluC 2, found in Staphylococcus aureus (strain Mu50 / ATCC 700699).